A 229-amino-acid chain; its full sequence is Lipoprotein-releasing system ATP-binding protein LolD (229 aa).

Residues 6–229 (LELDAIERTY…DGHLTPYVPA (224 aa)) enclose the ABC transporter domain. 42–49 (GPSGSGKS) is a binding site for ATP.

It belongs to the ABC transporter superfamily. Lipoprotein translocase (TC 3.A.1.125) family. The complex is composed of two ATP-binding proteins (LolD) and two transmembrane proteins (LolC and LolE).

It localises to the cell inner membrane. Its function is as follows. Part of the ABC transporter complex LolCDE involved in the translocation of mature outer membrane-directed lipoproteins, from the inner membrane to the periplasmic chaperone, LolA. Responsible for the formation of the LolA-lipoprotein complex in an ATP-dependent manner. The polypeptide is Lipoprotein-releasing system ATP-binding protein LolD (Maricaulis maris (strain MCS10) (Caulobacter maris)).